Reading from the N-terminus, the 963-residue chain is Phosphoenolpyruvate carboxylase (963 aa).

Residue S11 is modified to Phosphoserine. Active-site residues include H172 and K600.

It belongs to the PEPCase type 1 family. Homotetramer. Mg(2+) is required as a cofactor.

It is found in the cytoplasm. The enzyme catalyses oxaloacetate + phosphate = phosphoenolpyruvate + hydrogencarbonate. By light-reversible phosphorylation. Through the carboxylation of phosphoenolpyruvate (PEP) it forms oxaloacetate, a four-carbon dicarboxylic acid source for the tricarboxylic acid cycle. In Picea abies (Norway spruce), this protein is Phosphoenolpyruvate carboxylase (PPC).